Reading from the N-terminus, the 527-residue chain is Organic cation/carnitine transporter 2 (527 aa).

Residues 1 to 27 lie on the Cytoplasmic side of the membrane; the sequence is MAEPTQPLLTDSNSSSPRSLDDTIESY. The chain crosses the membrane as a helical span at residues 28 to 48; it reads IGSFGWAQFLQAALVSFSGVF. Topologically, residues 49 to 119 are extracellular; it reads DAQQTFISVF…SFVKGLPESS (71 aa). A helical transmembrane segment spans residues 120-140; it reads FFVGCLIGGLVLSTLADSSLG. Residues 141 to 149 are Cytoplasmic-facing; it reads RKNMLFLSC. The chain crosses the membrane as a helical span at residues 150 to 170; sequence LVMAISTMLTVFSPNIWVYAV. At 171–176 the chain is on the extracellular side; that stretch reads LRFVNG. The helical transmembrane segment at 177–195 threads the bilayer; sequence FGRATIGTCALVLSTELVG. 190-197 serves as a coordination point for ATP; that stretch reads STELVGKK. Residues 196–201 are Cytoplasmic-facing; it reads KKWRGR. The chain crosses the membrane as a helical span at residues 202–222; it reads VGIMSFFGFMLGFLSLPLMAY. Over 223–230 the chain is Extracellular; sequence MNRGSSWR. A helical membrane pass occupies residues 231–251; that stretch reads ILYAWTSIPTIIYCVLVRFFV. Topologically, residues 252-326 are cytoplasmic; that stretch reads CESPRWLFVR…LVEKRWALKR (75 aa). A helical transmembrane segment spans residues 327–347; sequence LSAVMAIAFGIGLVYYGMPLA. Topologically, residues 348–356 are extracellular; sequence LSNLDFNIY. The chain crosses the membrane as a helical span at residues 357 to 377; that stretch reads LSAAFNALMDLPANLITLFLV. Residues 378 to 385 lie on the Cytoplasmic side of the membrane; it reads DKLSRRNA. A helical membrane pass occupies residues 386–406; the sequence is LIGFTALGGVSSVLIFALHNM. The Extracellular segment spans residues 407–415; sequence RIGNHGALQ. Residues 416–436 form a helical membrane-spanning segment; the sequence is LALELISYFSACSAFNMEMIY. The Cytoplasmic portion of the chain corresponds to 437-448; sequence TIELFPTCVRNS. Residues 449–469 form a helical membrane-spanning segment; sequence AIAMARQALVLGGVFSPIMVA. Residues 470–475 are Extracellular-facing; sequence AGRKNA. A helical transmembrane segment spans residues 476 to 496; the sequence is FWSFGLFGLAIGLLGLFAVGL. The Cytoplasmic segment spans residues 497-527; sequence PETRGSDLCDTMDEEECKDRRSKVAVNNVIA.

The protein belongs to the major facilitator (TC 2.A.1) superfamily. Organic cation transporter (TC 2.A.1.19) family. Weakly expressed in roots, including tips and initiation site of lateral roots, siliques and flowers, especially in pollen and stigma.

It localises to the vacuole membrane. Functionally, high affinity carnitine transporter involved in the active cellular uptake of carnitine. Also transports organic cations. In Arabidopsis thaliana (Mouse-ear cress), this protein is Organic cation/carnitine transporter 2 (OCT2).